The sequence spans 352 residues: Holliday junction branch migration complex subunit RuvB (352 aa).

The large ATPase domain (RuvB-L) stretch occupies residues 4–185 (PDRLISAVSG…FGIVQRLEFY (182 aa)). ATP is bound by residues Ile24, Arg25, Gly66, Lys69, Thr70, Thr71, 132–134 (EDF), Arg175, Tyr185, and Arg222. Thr70 contacts Mg(2+). The small ATPAse domain (RuvB-S) stretch occupies residues 186–256 (NVEDLATIVS…IADKALNLLD (71 aa)). Residues 259 to 352 (ERGFDHLDRR…TDLFTSEDGN (94 aa)) form a head domain (RuvB-H) region. Residues Arg295, Arg314, and Arg319 each contribute to the DNA site.

Belongs to the RuvB family. Homohexamer. Forms an RuvA(8)-RuvB(12)-Holliday junction (HJ) complex. HJ DNA is sandwiched between 2 RuvA tetramers; dsDNA enters through RuvA and exits via RuvB. An RuvB hexamer assembles on each DNA strand where it exits the tetramer. Each RuvB hexamer is contacted by two RuvA subunits (via domain III) on 2 adjacent RuvB subunits; this complex drives branch migration. In the full resolvosome a probable DNA-RuvA(4)-RuvB(12)-RuvC(2) complex forms which resolves the HJ.

It localises to the cytoplasm. It carries out the reaction ATP + H2O = ADP + phosphate + H(+). The RuvA-RuvB-RuvC complex processes Holliday junction (HJ) DNA during genetic recombination and DNA repair, while the RuvA-RuvB complex plays an important role in the rescue of blocked DNA replication forks via replication fork reversal (RFR). RuvA specifically binds to HJ cruciform DNA, conferring on it an open structure. The RuvB hexamer acts as an ATP-dependent pump, pulling dsDNA into and through the RuvAB complex. RuvB forms 2 homohexamers on either side of HJ DNA bound by 1 or 2 RuvA tetramers; 4 subunits per hexamer contact DNA at a time. Coordinated motions by a converter formed by DNA-disengaged RuvB subunits stimulates ATP hydrolysis and nucleotide exchange. Immobilization of the converter enables RuvB to convert the ATP-contained energy into a lever motion, pulling 2 nucleotides of DNA out of the RuvA tetramer per ATP hydrolyzed, thus driving DNA branch migration. The RuvB motors rotate together with the DNA substrate, which together with the progressing nucleotide cycle form the mechanistic basis for DNA recombination by continuous HJ branch migration. Branch migration allows RuvC to scan DNA until it finds its consensus sequence, where it cleaves and resolves cruciform DNA. This Pseudomonas aeruginosa (strain LESB58) protein is Holliday junction branch migration complex subunit RuvB.